The following is a 306-amino-acid chain: Dermonecrotic toxin LiSicTox-alphaIA1bi (306 aa).

The signal sequence occupies residues 1 to 18 (MLPYIVLVLGCWSVLSQA). A propeptide spanning residues 19-26 (AQTDDEER) is cleaved from the precursor. The active site involves histidine 38. The Mg(2+) site is built by glutamate 58 and aspartate 60. The Nucleophile role is filled by histidine 74. 2 cysteine pairs are disulfide-bonded: cysteine 78–cysteine 84 and cysteine 80–cysteine 223. Aspartate 118 provides a ligand contact to Mg(2+).

The protein belongs to the arthropod phospholipase D family. Class II subfamily. Class IIa sub-subfamily. It depends on Mg(2+) as a cofactor. As to expression, expressed by the venom gland.

It is found in the secreted. It carries out the reaction an N-(acyl)-sphingosylphosphocholine = an N-(acyl)-sphingosyl-1,3-cyclic phosphate + choline. The catalysed reaction is an N-(acyl)-sphingosylphosphoethanolamine = an N-(acyl)-sphingosyl-1,3-cyclic phosphate + ethanolamine. The enzyme catalyses a 1-acyl-sn-glycero-3-phosphocholine = a 1-acyl-sn-glycero-2,3-cyclic phosphate + choline. It catalyses the reaction a 1-acyl-sn-glycero-3-phosphoethanolamine = a 1-acyl-sn-glycero-2,3-cyclic phosphate + ethanolamine. Dermonecrotic toxins cleave the phosphodiester linkage between the phosphate and headgroup of certain phospholipids (sphingolipid and lysolipid substrates), forming an alcohol (often choline) and a cyclic phosphate. This toxin acts on sphingomyelin (SM). The level of enzymatic activity is high according to Tambourgi and colleagues or low according to Felicori and colleagues. It may also act on ceramide phosphoethanolamine (CPE), lysophosphatidylcholine (LPC) and lysophosphatidylethanolamine (LPE), but not on lysophosphatidylserine (LPS), and lysophosphatidylglycerol (LPG). It acts by transphosphatidylation, releasing exclusively cyclic phosphate products as second products. It induces complement-dependent hemolysis, dermonecrosis, vascular permeability and platelet aggregation. Both C5a and the membrane attack complex may play a role in the induction of dermonecrosis. MMP-9 and MMP-2 produced by skin fibroblasts can also contribute to proteolytic tissue destruction. This chain is Dermonecrotic toxin LiSicTox-alphaIA1bi, found in Loxosceles intermedia (Brown spider).